Reading from the N-terminus, the 185-residue chain is Ribosome-recycling factor (185 aa).

It belongs to the RRF family.

The protein localises to the cytoplasm. In terms of biological role, responsible for the release of ribosomes from messenger RNA at the termination of protein biosynthesis. May increase the efficiency of translation by recycling ribosomes from one round of translation to another. The polypeptide is Ribosome-recycling factor (Bacillus cytotoxicus (strain DSM 22905 / CIP 110041 / 391-98 / NVH 391-98)).